Reading from the N-terminus, the 702-residue chain is Elongation factor G (702 aa).

Residues C8–N290 enclose the tr-type G domain. Residues A17–T24, D88–H92, and N142–D145 each bind GTP.

Belongs to the TRAFAC class translation factor GTPase superfamily. Classic translation factor GTPase family. EF-G/EF-2 subfamily.

The protein resides in the cytoplasm. In terms of biological role, catalyzes the GTP-dependent ribosomal translocation step during translation elongation. During this step, the ribosome changes from the pre-translocational (PRE) to the post-translocational (POST) state as the newly formed A-site-bound peptidyl-tRNA and P-site-bound deacylated tRNA move to the P and E sites, respectively. Catalyzes the coordinated movement of the two tRNA molecules, the mRNA and conformational changes in the ribosome. The sequence is that of Elongation factor G from Buchnera aphidicola subsp. Schizaphis graminum (strain Sg).